A 403-amino-acid chain; its full sequence is MKEESILVKAGRKFNDYKGSMNPPVYHSSTILFPTYKDYLNAANGESIYDVINDGVARDYSYSNVGTPTVHYLSNALAEIEGSGQALIYPSGLFALTFAILTFAKAGSHVLIQDNSYYRLRRFAENELPKRGTEVTFYDPTQDITDLIQSNTSLIMIETPGSVTFEISNIEHIVKVAKEHKIVTVCDNSWATPLLFKPLDYGVDVALYAVTKYLAGHSDLVMGAIIAEGEIFKLLYESYKNYGVTIQSHDCYLAHRGLRTLYTRMKRHQNTAMEVAKWLEKHSKIKKVLYPALPFHPQHELWKSYFKGASGTFSIALDREYSCEELSCMVDHMKIFGIGASWGGCDSLILPIDRRSMSRSVMNSDYGGSFIRIFCGLEDPEDLISDLNAALARLPCLNTKTGR.

Pyridoxal 5'-phosphate contacts are provided by residues 62–64 (YSN), 92–93 (GL), and 209–211 (AVT). An N6-(pyridoxal phosphate)lysine modification is found at lysine 212.

The protein belongs to the trans-sulfuration enzymes family. In terms of assembly, homotetramer; dimer of active dimers. The cofactor is pyridoxal 5'-phosphate.

The catalysed reaction is L-alanine = D-alanine. It carries out the reaction L-glutamate = D-glutamate. It catalyses the reaction L,L-cystathionine + H2O = L-homocysteine + pyruvate + NH4(+). Its pathway is cell wall biogenesis; peptidoglycan biosynthesis. Catalyzes the racemization of L-alanine to D-alanine, and of L-glutamate to D-glutamate. The activity is low, but likely physiological since W.pipientis wMel lacks canonical alr and murI genes, while D-alanine and D-glutamate are essential components of peptidoglycan. Also displays a vestigial cystathionine beta-lyase (CBL) activity, cleaving cystathionine to homocysteine and pyruvate; however, this reaction seems not to be physiologically relevant since the only met gene in the genome of this obligately intracellular parasitic bacterium is metC, demonstrating that it is a methionine auxotroph. The polypeptide is L-alanine/L-glutamate racemase (Wolbachia pipientis wMel).